The following is a 198-amino-acid chain: ATP-dependent Clp protease proteolytic subunit (198 aa).

The Nucleophile role is filled by S98. Residue H123 is part of the active site.

It belongs to the peptidase S14 family. As to quaternary structure, fourteen ClpP subunits assemble into 2 heptameric rings which stack back to back to give a disk-like structure with a central cavity, resembling the structure of eukaryotic proteasomes.

The protein localises to the cytoplasm. It carries out the reaction Hydrolysis of proteins to small peptides in the presence of ATP and magnesium. alpha-casein is the usual test substrate. In the absence of ATP, only oligopeptides shorter than five residues are hydrolyzed (such as succinyl-Leu-Tyr-|-NHMec, and Leu-Tyr-Leu-|-Tyr-Trp, in which cleavage of the -Tyr-|-Leu- and -Tyr-|-Trp bonds also occurs).. Its function is as follows. Cleaves peptides in various proteins in a process that requires ATP hydrolysis. Has a chymotrypsin-like activity. Plays a major role in the degradation of misfolded proteins. The sequence is that of ATP-dependent Clp protease proteolytic subunit from Listeria monocytogenes serovar 1/2a (strain ATCC BAA-679 / EGD-e).